The chain runs to 186 residues: CASP-like protein ARALYDRAFT_316979 (186 aa).

The Cytoplasmic portion of the chain corresponds to 1–23 (MRRNGDGEEVVAKRRRRIKELVQ). The chain crosses the membrane as a helical span at residues 24–44 (VALRGGCLAASATAMAVMLTA). Topologically, residues 45–70 (TEEGVADIYGFKLTLSSNWSFSPSYQ) are extracellular. Asn62 carries N-linked (GlcNAc...) asparagine glycosylation. A helical transmembrane segment spans residues 71–91 (YVVGACTGTVLYSLFQLCLGV). Topologically, residues 92-115 (YRLLTGSPITPSRFQAWLCFTSDQ) are cytoplasmic. A helical membrane pass occupies residues 116 to 132 (LFGYLMMSAGSAGSGVT). Residues 133–161 (NLNKTGIRHTPLPDFCKTLSSFCNHVALS) are Extracellular-facing. Residue Asn135 is glycosylated (N-linked (GlcNAc...) asparagine). The helical transmembrane segment at 162–182 (LLLVFLSFIFLASSSFFTVLV) threads the bilayer. Topologically, residues 183–186 (LSTP) are cytoplasmic.

It belongs to the Casparian strip membrane proteins (CASP) family. As to quaternary structure, homodimer and heterodimers.

It localises to the cell membrane. In Arabidopsis lyrata subsp. lyrata (Lyre-leaved rock-cress), this protein is CASP-like protein ARALYDRAFT_316979.